Here is a 248-residue protein sequence, read N- to C-terminus: Coproheme decarboxylase (248 aa).

Fe-coproporphyrin III-binding positions include Arg130, 144-148, His171, Gln184, and Ser222; that span reads YPMDK. Tyr144 is an active-site residue.

It belongs to the ChdC family. Type 1 subfamily. Fe-coproporphyrin III is required as a cofactor.

It catalyses the reaction Fe-coproporphyrin III + 2 H2O2 + 2 H(+) = heme b + 2 CO2 + 4 H2O. The enzyme catalyses Fe-coproporphyrin III + H2O2 + H(+) = harderoheme III + CO2 + 2 H2O. It carries out the reaction harderoheme III + H2O2 + H(+) = heme b + CO2 + 2 H2O. It functions in the pathway porphyrin-containing compound metabolism; protoheme biosynthesis. Involved in coproporphyrin-dependent heme b biosynthesis. Catalyzes the decarboxylation of Fe-coproporphyrin III (coproheme) to heme b (protoheme IX), the last step of the pathway. The reaction occurs in a stepwise manner with a three-propionate intermediate. This is Coproheme decarboxylase from Geobacillus thermodenitrificans (strain NG80-2).